Consider the following 442-residue polypeptide: Xaa-Pro dipeptidase (442 aa).

Mn(2+) is bound by residues aspartate 245, aspartate 256, histidine 338, glutamate 383, and glutamate 422.

Belongs to the peptidase M24B family. Bacterial-type prolidase subfamily. Requires Mn(2+) as cofactor.

It carries out the reaction Xaa-L-Pro dipeptide + H2O = an L-alpha-amino acid + L-proline. In terms of biological role, splits dipeptides with a prolyl residue in the C-terminal position. This Sodalis glossinidius (strain morsitans) protein is Xaa-Pro dipeptidase.